The chain runs to 225 residues: MKFPDLLRCSRAVSLARPDLPRNSPDVYDTKIPILQAITAKKCQRFRGDWGAKRKLPILKNRHISIQKFDTFEHQCAFISSDRFVRTLKRIYDLKLPVPLNDYEQISPYLLQKYNTFSSSNPKSRPTLPPGILYAKLKLLDSFSDSEKKRLSLVSFIQTKKVPLPFTYGKFAPDSKECLFGVSGVIAATSLKGITSTKNRYVIRSLNVDETGKTIPNITRENRSI.

Residues 1–84 (MKFPDLLRCS…QCAFISSDRF (84 aa)) constitute a mitochondrion transit peptide.

This sequence belongs to the bacterial ribosomal protein bS1 family. Component of the mitochondrial small ribosomal subunit (mt-SSU). Mature yeast 74S mitochondrial ribosomes consist of a small (37S) and a large (54S) subunit. The 37S small subunit contains a 15S ribosomal RNA (15S mt-rRNA) and at least 32 different proteins. The 54S large subunit contains a 21S rRNA (21S mt-rRNA) and at least 45 different proteins. This subunit is mutually exclusive with mrp51/small ribosomal subunit protein bS1m.

It is found in the mitochondrion. In terms of biological role, component of the mitochondrial ribosome (mitoribosome), a dedicated translation machinery responsible for the synthesis of mitochondrial genome-encoded proteins, including at least some of the essential transmembrane subunits of the mitochondrial respiratory chain. The mitoribosomes are attached to the mitochondrial inner membrane and translation products are cotranslationally integrated into the membrane. Functionally interacts with the 5'-UTR of mitochondrial mRNAs. Specifically plays a role in the translation of cob1/cytochrome b and cox3. Has a role in meiosis. The protein is Small ribosomal subunit protein L51-b of Schizosaccharomyces pombe (strain 972 / ATCC 24843) (Fission yeast).